The chain runs to 188 residues: Dual specificity protein phosphatase 18 (188 aa).

One can recognise a Tyrosine-protein phosphatase domain in the interval 19-160 (GLSQITKSLY…LIHYEFQLFG (142 aa)). The sufficient for mitochondrial localization stretch occupies residues 95 to 141 (MKQGRTLLHCAAGVSRSAALCLAYLMKYHAMSLLDAHTWTKSCRPII). Residue cysteine 104 is the Phosphocysteine intermediate of the active site.

The protein belongs to the protein-tyrosine phosphatase family. Non-receptor class dual specificity subfamily.

It is found in the cytoplasm. The protein resides in the nucleus. The protein localises to the mitochondrion inner membrane. The catalysed reaction is O-phospho-L-tyrosyl-[protein] + H2O = L-tyrosyl-[protein] + phosphate. The enzyme catalyses O-phospho-L-seryl-[protein] + H2O = L-seryl-[protein] + phosphate. It catalyses the reaction O-phospho-L-threonyl-[protein] + H2O = L-threonyl-[protein] + phosphate. In terms of biological role, can dephosphorylate single and diphosphorylated synthetic MAPK peptides, with preference for the phosphotyrosine and diphosphorylated forms over phosphothreonine. In vitro, dephosphorylates p-nitrophenyl phosphate (pNPP). The chain is Dual specificity protein phosphatase 18 (DUSP18) from Pongo abelii (Sumatran orangutan).